The following is a 727-amino-acid chain: Kinesin-like protein KIN-14G (727 aa).

Disordered stretches follow at residues 100–156, 172–194, and 336–357; these read QTAP…LHLR, HLSAPSRSPTPPPNAVAPSSCSR, and LAGGARSGRRDNPRRQGTGATR. Polar residues predominate over residues 114–133; sequence VASSTAGRASRTKSASSTGR. The region spanning 381–710 is the Kinesin motor domain; sequence NIRVFCRVRP…LRFAARVNSC (330 aa). 461-468 is an ATP binding site; that stretch reads GQTGSGKT.

The protein belongs to the TRAFAC class myosin-kinesin ATPase superfamily. Kinesin family. KIN-14 subfamily.

In Oryza sativa subsp. japonica (Rice), this protein is Kinesin-like protein KIN-14G.